We begin with the raw amino-acid sequence, 119 residues long: Flagellar transcriptional regulator FlhD (119 aa).

The protein belongs to the FlhD family. In terms of assembly, homodimer; disulfide-linked. Forms a heterohexamer composed of two FlhC and four FlhD subunits. Each FlhC binds a FlhD dimer, forming a heterotrimer, and a hexamer assembles by dimerization of two heterotrimers.

Its subcellular location is the cytoplasm. In terms of biological role, functions in complex with FlhC as a master transcriptional regulator that regulates transcription of several flagellar and non-flagellar operons by binding to their promoter region. Activates expression of class 2 flagellar genes, including fliA, which is a flagellum-specific sigma factor that turns on the class 3 genes. Also regulates genes whose products function in a variety of physiological pathways. This is Flagellar transcriptional regulator FlhD from Serratia marcescens.